A 294-amino-acid polypeptide reads, in one-letter code: Protoheme IX farnesyltransferase (294 aa).

A run of 9 helical transmembrane segments spans residues 8–28, 35–55, 81–101, 107–127, 133–153, 163–183, 209–226, 230–252, and 266–286; these read LTKPGIVLGNLMSSAGGFLIA, YSLFITMIVGTALVIASGCVL, IFLNQSIFYAVILSIFGFLFL, VLTIYLSAIGLFIYVGVYSLW, IYSIMVGSISGAMPPVIGYCA, LMLLIIFSLWQIPHSHSIAIL, MVVYIIGFIIATILFTVM, SYIFLIIISIMNLWWLHMGFYGY, and FLLSLIIIISLNLLLSLDHIL.

Belongs to the UbiA prenyltransferase family. Protoheme IX farnesyltransferase subfamily.

It is found in the cell inner membrane. The catalysed reaction is heme b + (2E,6E)-farnesyl diphosphate + H2O = Fe(II)-heme o + diphosphate. It participates in porphyrin-containing compound metabolism; heme O biosynthesis; heme O from protoheme: step 1/1. In terms of biological role, converts heme B (protoheme IX) to heme O by substitution of the vinyl group on carbon 2 of heme B porphyrin ring with a hydroxyethyl farnesyl side group. The polypeptide is Protoheme IX farnesyltransferase (Blochmanniella pennsylvanica (strain BPEN)).